Reading from the N-terminus, the 299-residue chain is uncharacterized protein (299 aa).

This is an uncharacterized protein from Acanthamoeba polyphaga mimivirus (APMV).